The primary structure comprises 290 residues: 33 kDa chaperonin (290 aa).

2 cysteine pairs are disulfide-bonded: C231–C233 and C263–C266.

It belongs to the HSP33 family. In terms of processing, under oxidizing conditions two disulfide bonds are formed involving the reactive cysteines. Under reducing conditions zinc is bound to the reactive cysteines and the protein is inactive.

The protein resides in the cytoplasm. In terms of biological role, redox regulated molecular chaperone. Protects both thermally unfolding and oxidatively damaged proteins from irreversible aggregation. Plays an important role in the bacterial defense system toward oxidative stress. This is 33 kDa chaperonin from Thermotoga maritima (strain ATCC 43589 / DSM 3109 / JCM 10099 / NBRC 100826 / MSB8).